Reading from the N-terminus, the 486-residue chain is MIQVLLVTICLAVFPYQGSSIILESGNVNDYEVVYPRKVTALPKGAVQQKYEDAMQYEFKVNGEPVVLHLEKNKELFSEDYSETHYSPDGREITTYPLVEDHCYYHGRIENDADSTASISACNGLKGHFKLQGEMYLIEPLELSDSEAHAVYKYENVEKEDEAPKMCGVTQNWESHEPIKKASQSNLPPEQEELLKRYIELVVVADHRMYTIYDGDKTEISSIIYEIVNILTQIFRPLHIRVALIGLEIWSSGELSKVTLSADDTLEAFGEWRETVLMNRKRHDHAQLLTGMIFSGTIEGRTYKSRMCDPKHSVGIVRDHRTRRHFVANRMAHELGHNLGIDHDRDSCSCGANSCIMSATVSNEPSSQFSDCSLNQYLKHIIHYHYTTCLYNEPSKTDIVSPPVCGNYYTEVGEDCDCGPPANCQNPCCDAATCKVTTGSQCAEGLCCDQCKFMKEGTVCRVARGDWNNDICTGQSAECPNKGYYG.

The signal sequence occupies residues 1–20; the sequence is MIQVLLVTICLAVFPYQGSS. The propeptide occupies 21-190; the sequence is IILESGNVND…KASQSNLPPE (170 aa). Residue Q191 is modified to Pyrrolidone carboxylic acid. The Peptidase M12B domain maps to 197-394; it reads RYIELVVVAD…HYTTCLYNEP (198 aa). Residues E200 and D284 each contribute to the Ca(2+) site. 3 cysteine pairs are disulfide-bonded: C308–C389, C348–C372, and C350–C355. Residue H333 coordinates Zn(2+). The active site involves E334. Zn(2+) is bound by residues H337 and H343. Ca(2+) contacts are provided by C389 and N392. The region spanning 402–486 is the Disintegrin domain; sequence PPVCGNYYTE…AECPNKGYYG (85 aa). Intrachain disulfides connect C405–C424, C416–C434, C418–C429, C428–C451, C442–C448, C447–C472, and C460–C479. The short motif at 464-466 is the Cell attachment site element; that stretch reads RGD.

It belongs to the venom metalloproteinase (M12B) family. P-II subfamily. P-IIb sub-subfamily. As to quaternary structure, monomer. Requires Zn(2+) as cofactor. As to expression, expressed by the venom gland.

Its subcellular location is the secreted. Functionally, snake venom zinc metalloproteinase that inhibits ADP-induced platelet aggregation (probably by binding integrin alpha-IIb/beta-3 (ITGA2B/ITGB3)) and degrades fibrinogen. In Crotalus atrox (Western diamondback rattlesnake), this protein is Zinc metalloproteinase-disintegrin VMP-II.